The primary structure comprises 504 residues: Arabinose import ATP-binding protein AraG (504 aa).

ABC transporter domains lie at 8-243 (LSFR…MVGR) and 256-499 (YGEE…MPKV). 40–47 (GENGAGKS) is an ATP binding site.

It belongs to the ABC transporter superfamily. Arabinose importer (TC 3.A.1.2.2) family. In terms of assembly, the complex is composed of two ATP-binding proteins (AraG), two transmembrane proteins (AraH) and a solute-binding protein (AraF).

It localises to the cell inner membrane. It carries out the reaction L-arabinose(out) + ATP + H2O = L-arabinose(in) + ADP + phosphate + H(+). Functionally, part of the ABC transporter complex AraFGH involved in arabinose import. Responsible for energy coupling to the transport system. The polypeptide is Arabinose import ATP-binding protein AraG (Shigella flexneri).